Here is a 379-residue protein sequence, read N- to C-terminus: UDP-4-amino-4-deoxy-L-arabinose--oxoglutarate aminotransferase (379 aa).

An N6-(pyridoxal phosphate)lysine modification is found at K182.

It belongs to the DegT/DnrJ/EryC1 family. ArnB subfamily. Homodimer. Pyridoxal 5'-phosphate is required as a cofactor.

It catalyses the reaction UDP-4-amino-4-deoxy-beta-L-arabinose + 2-oxoglutarate = UDP-beta-L-threo-pentopyranos-4-ulose + L-glutamate. It functions in the pathway nucleotide-sugar biosynthesis; UDP-4-deoxy-4-formamido-beta-L-arabinose biosynthesis; UDP-4-deoxy-4-formamido-beta-L-arabinose from UDP-alpha-D-glucuronate: step 2/3. It participates in bacterial outer membrane biogenesis; lipopolysaccharide biosynthesis. Its function is as follows. Catalyzes the conversion of UDP-4-keto-arabinose (UDP-Ara4O) to UDP-4-amino-4-deoxy-L-arabinose (UDP-L-Ara4N). The modified arabinose is attached to lipid A and is required for resistance to polymyxin and cationic antimicrobial peptides. This is UDP-4-amino-4-deoxy-L-arabinose--oxoglutarate aminotransferase from Klebsiella pneumoniae (strain 342).